A 388-amino-acid polypeptide reads, in one-letter code: Pepsin A-1 (388 aa).

A signal peptide spans 1 to 15; it reads MKWLLLLGLVALSEC. 2 consecutive propeptides (activation peptide) follow at residues 16-40 and 41-62; these read IIYKVPLVRKKSLRRNLSEHGLLKD and FLKKHNLNPASKYFPQAEAPTL. Positions 76–385 constitute a Peptidase A1 domain; the sequence is YFGTIGIGTP…DRANNQVGLA (310 aa). The active site involves Asp94. Cys107 and Cys112 are disulfide-bonded. A Phosphoserine modification is found at Ser130. Residues Cys268 and Cys272 are joined by a disulfide bond. The active site involves Asp277. Cys311 and Cys344 are oxidised to a cystine.

It belongs to the peptidase A1 family. Each pepsinogen is converted to corresponding pepsin at pH 2.0 in part as a result of the release of a 47 AA activation segment and in part as a result of stepwise proteolytic cleavage via an intermediate form(s).

It is found in the secreted. It carries out the reaction Preferential cleavage: hydrophobic, preferably aromatic, residues in P1 and P1' positions. Cleaves 1-Phe-|-Val-2, 4-Gln-|-His-5, 13-Glu-|-Ala-14, 14-Ala-|-Leu-15, 15-Leu-|-Tyr-16, 16-Tyr-|-Leu-17, 23-Gly-|-Phe-24, 24-Phe-|-Phe-25 and 25-Phe-|-Tyr-26 bonds in the B chain of insulin.. Its function is as follows. Shows particularly broad specificity; although bonds involving phenylalanine and leucine are preferred, many others are also cleaved to some extent. The chain is Pepsin A-1 (PGA) from Macaca fuscata fuscata (Japanese macaque).